The following is a 75-amino-acid chain: MKGETPVNSTMSIGQARKMVEQLKIEASLCRIKVSKAAADLMTYCDAHACEDPLITPVPTSENPFREKKFFCALL.

Thr-5 carries the phosphothreonine modification. Ser-9 carries the post-translational modification Phosphoserine. Position 10 is a phosphothreonine (Thr-10). Position 12 is a phosphoserine (Ser-12). Cysteine methyl ester is present on Cys-72. A lipid anchor (S-geranylgeranyl cysteine) is attached at Cys-72. Residues 73–75 (ALL) constitute a propeptide, removed in mature form.

This sequence belongs to the G protein gamma family. G proteins are composed of 3 units, alpha, beta and gamma. Forms a complex with GNAO1 and GNB1. Interacts with SCN8A. Abundantly expressed in brain. Low levels in testis.

It localises to the cell membrane. Its function is as follows. Guanine nucleotide-binding proteins (G proteins) are involved as a modulator or transducer in various transmembrane signaling systems. The beta and gamma chains are required for the GTPase activity, for replacement of GDP by GTP, and for G protein-effector interaction. The chain is Guanine nucleotide-binding protein G(I)/G(S)/G(O) subunit gamma-3 (GNG3) from Bos taurus (Bovine).